Here is a 200-residue protein sequence, read N- to C-terminus: Inner membrane-spanning protein YciB (200 aa).

6 helical membrane-spanning segments follow: residues 7-27, 32-52, 56-76, 93-113, 126-146, and 153-173; these read HPLFKLATELGPLIVFFFVNA, FAATGAFMVAIIAALIASYVV, IPLMALVTAVVVIVFGTLTLV, LFAAVLGGGLVFNRSFIAIMF, ILTFRWALFFAGMAVLNEIIW, and FWVGFKAFGVLPLTMIFAIAQ.

This sequence belongs to the YciB family.

The protein localises to the cell inner membrane. Functionally, plays a role in cell envelope biogenesis, maintenance of cell envelope integrity and membrane homeostasis. This is Inner membrane-spanning protein YciB from Bradyrhizobium sp. (strain ORS 278).